A 670-amino-acid polypeptide reads, in one-letter code: Penicillin-binding protein activator LpoA (670 aa).

Positions 1 to 26 (MLPSKVVHRKAVRTVPLLLAALIFAG) are cleaved as a signal peptide. The N-palmitoyl cysteine moiety is linked to residue Cys-27. Cys-27 carries the S-diacylglycerol cysteine lipid modification.

Belongs to the LpoA family. As to quaternary structure, interacts with PBP1a.

The protein localises to the cell outer membrane. Its function is as follows. Regulator of peptidoglycan synthesis that is essential for the function of penicillin-binding protein 1A (PBP1a). This is Penicillin-binding protein activator LpoA from Erwinia tasmaniensis (strain DSM 17950 / CFBP 7177 / CIP 109463 / NCPPB 4357 / Et1/99).